Here is a 524-residue protein sequence, read N- to C-terminus: Lysophospholipid acyltransferase LPCAT4 (524 aa).

The next 2 helical transmembrane spans lie at 40 to 62 (CLLG…FLLW) and 87 to 107 (TVCH…LGFL). An HXXXXD motif motif is present at residues 129–134 (HSTFFD). N-linked (GlcNAc...) asparagine glycosylation occurs at N152. The interval 489 to 524 (PPHTSRGTSQTPNASSPGNPTALANGTVQAPKQKGD) is disordered. Over residues 493–518 (SRGTSQTPNASSPGNPTALANGTVQA) the composition is skewed to polar residues.

This sequence belongs to the 1-acyl-sn-glycerol-3-phosphate acyltransferase family. In terms of tissue distribution, widely expressed with predominant level in brain.

Its subcellular location is the endoplasmic reticulum membrane. The catalysed reaction is a 1-acyl-sn-glycero-3-phosphoethanolamine + an acyl-CoA = a 1,2-diacyl-sn-glycero-3-phosphoethanolamine + CoA. The enzyme catalyses a 1-O-(1Z-alkenyl)-sn-glycero-3-phosphoethanolamine + an acyl-CoA = a 1-O-(1Z-alkenyl)-2-acyl-sn-glycero-3-phosphoethanolamine + CoA. It catalyses the reaction a 1-acyl-sn-glycero-3-phosphocholine + an acyl-CoA = a 1,2-diacyl-sn-glycero-3-phosphocholine + CoA. It carries out the reaction a 1-O-alkyl-sn-glycero-3-phosphocholine + acetyl-CoA = a 1-O-alkyl-2-acetyl-sn-glycero-3-phosphocholine + CoA. The catalysed reaction is a 1-acyl-sn-glycero-3-phospho-L-serine + an acyl-CoA = a 1,2-diacyl-sn-glycero-3-phospho-L-serine + CoA. The enzyme catalyses octanoyl-CoA + a 1-acyl-sn-glycero-3-phosphoethanolamine = 1-acyl-2-octanoyl-sn-glycero-3-phosphoethanolamine + CoA. It catalyses the reaction a 1-acyl-sn-glycero-3-phosphoethanolamine + hexadecanoyl-CoA = 1-acyl-2-hexadecanoyl-sn-glycero-3-phosphoethanolamine + CoA. It carries out the reaction a 1-acyl-sn-glycero-3-phosphoethanolamine + octadecanoyl-CoA = 1-acyl-2-octadecanoyl-sn-glycero-3-phosphoethanolamine + CoA. The catalysed reaction is a 1-acyl-sn-glycero-3-phosphoethanolamine + (9Z)-octadecenoyl-CoA = 1-acyl-2-(9Z)-octadecenoyl-sn-glycero-3-phosphoethanolamine + CoA. The enzyme catalyses a 1-acyl-sn-glycero-3-phosphoethanolamine + (5Z,8Z,11Z,14Z)-eicosatetraenoyl-CoA = 1-acyl-2-(5Z,8Z,11Z,14Z)-eicosatetraenoyl-sn-glycero-3-phosphoethanolamine + CoA. It catalyses the reaction a 1-O-(1Z-alkenyl)-sn-glycero-3-phosphoethanolamine + octanoyl-CoA = 1-O-(1Z)-alkenyl-2-octanoyl-sn-glycero-3-phosphoethanolamine + CoA. It carries out the reaction a 1-O-(1Z-alkenyl)-sn-glycero-3-phosphoethanolamine + hexadecanoyl-CoA = 1-O-(1Z)-alkenyl-2-hexadecanoyl-sn-glycero-3-phosphoethanolamine + CoA. The catalysed reaction is a 1-O-(1Z-alkenyl)-sn-glycero-3-phosphoethanolamine + octadecanoyl-CoA = 1-O-(1Z)-alkenyl-2-octadecanoyl-sn-glycero-3-phosphoethanolamine + CoA. The enzyme catalyses a 1-O-(1Z-alkenyl)-sn-glycero-3-phosphoethanolamine + (9Z)-octadecenoyl-CoA = 1-O-(1Z)-alkenyl-2-(9Z)-octadecenoyl-sn-glycero-3-phosphoethanolamine + CoA. It catalyses the reaction a 1-O-(1Z-alkenyl)-sn-glycero-3-phosphoethanolamine + (5Z,8Z,11Z,14Z)-eicosatetraenoyl-CoA = 1-O-(1Z)-alkenyl-2-(5Z,8Z,11Z,14Z)-eicosatetraenoyl-sn-glycero-3-phosphoethanolamine + CoA. It carries out the reaction a 1-acyl-sn-glycero-3-phosphocholine + hexadecanoyl-CoA = 1-acyl-2-hexadecanoyl-sn-glycero-3-phosphocholine + CoA. The catalysed reaction is a 1-acyl-sn-glycero-3-phosphocholine + (9Z)-octadecenoyl-CoA = a 1-acyl-2-(9Z)-octadecenoyl-sn-glycero-3-phosphocholine + CoA. The enzyme catalyses 1-O-hexadecyl-sn-glycero-3-phosphocholine + (9Z)-octadecenoyl-CoA = 1-O-hexadecyl-2-(9Z)-octadecenoyl-sn-glycero-3-phosphocholine + CoA. It catalyses the reaction 1-O-hexadecyl-sn-glycero-3-phosphocholine + (5Z,8Z,11Z,14Z)-eicosatetraenoyl-CoA = 1-O-hexadecyl-2-(5Z,8Z,11Z,14Z)-eicosatetraenoyl-sn-glycero-3-phosphocholine + CoA. It carries out the reaction 1-hexadecanoyl-sn-glycero-3-phospho-L-serine + (9Z)-octadecenoyl-CoA = 1-hexadecanoyl-2-(9Z-octadecenoyl)-sn-glycero-3-phospho-L-serine + CoA. The catalysed reaction is 1-octadecanoyl-sn-glycero-3-phospho-(1'-sn-glycerol) + (9Z)-octadecenoyl-CoA = 1-octadecanoyl-2-(9Z-octadecenoyl)-sn-glycero-3-phospho-(1'-sn-glycerol) + CoA. The enzyme catalyses 1-octadecanoyl-sn-glycero-3-phospho-(1'-sn-glycerol) + (5Z,8Z,11Z,14Z)-eicosatetraenoyl-CoA = 1-octadecanoyl-2-(5Z,8Z,11Z,14Z-eicosatetraenoyl)-sn-glycero-3-phospho-(1'-sn-glycerol) + CoA. Its pathway is lipid metabolism; phospholipid metabolism. In terms of biological role, displays acyl-CoA-dependent lysophospholipid acyltransferase activity with a subset of lysophospholipids as substrates; converts lysophosphatidylethanolamine to phosphatidylethanolamine, lysophosphatidylcholine to phosphatidycholine, 1-alkenyl-lysophatidylethanolamine to 1-alkenyl-phosphatidylethanolamine, lysophosphatidylglycerol and alkyl-lysophosphatidylcholine to phosphatidylglycerol and alkyl-phosphatidylcholine, respectively. In contrast, has no lysophosphatidylinositol, glycerol-3-phosphate, diacylglycerol or lysophosphatidic acid acyltransferase activity. Prefers long chain acyl-CoAs (C16, C18) as acyl donors. This chain is Lysophospholipid acyltransferase LPCAT4 (LPCAT4), found in Homo sapiens (Human).